Reading from the N-terminus, the 170-residue chain is uncharacterized protein (170 aa).

This is an uncharacterized protein from Acidianus convivator (ATV).